The sequence spans 54 residues: Small polypeptide DEVIL 12 (54 aa).

A required for DVL/RTFL small polypeptide activity region spans residues Asn20 to Glu51. Asn26 carries N-linked (GlcNAc...) asparagine glycosylation. A helical transmembrane segment spans residues Glu31–Cys48.

The protein belongs to the DVL/RTFL small polypeptides family.

The protein resides in the cell membrane. Its function is as follows. Small polypeptide acting as a regulatory molecule which coordinates cellular responses required for differentiation, growth and development, probably by restricting polar cell proliferation in lateral organs and coordinating socket cell recruitment and differentiation at trichome sites. The polypeptide is Small polypeptide DEVIL 12 (Arabidopsis thaliana (Mouse-ear cress)).